A 156-amino-acid chain; its full sequence is Arginine repressor (156 aa).

The protein belongs to the ArgR family.

The protein resides in the cytoplasm. The protein operates within amino-acid biosynthesis; L-arginine biosynthesis [regulation]. Its function is as follows. Regulates arginine biosynthesis genes. The chain is Arginine repressor from Shewanella pealeana (strain ATCC 700345 / ANG-SQ1).